A 205-amino-acid polypeptide reads, in one-letter code: Proteasome subunit beta (205 aa).

A propeptide spans 1–8 (MDDKQYKG) (removed in mature form; by autocatalysis). Thr9 functions as the Nucleophile in the catalytic mechanism.

The protein belongs to the peptidase T1B family. In terms of assembly, the 20S proteasome core is composed of 14 alpha and 14 beta subunits that assemble into four stacked heptameric rings, resulting in a barrel-shaped structure. The two inner rings, each composed of seven catalytic beta subunits, are sandwiched by two outer rings, each composed of seven alpha subunits. The catalytic chamber with the active sites is on the inside of the barrel. Has a gated structure, the ends of the cylinder being occluded by the N-termini of the alpha-subunits. Is capped at one or both ends by the proteasome regulatory ATPase, PAN.

It is found in the cytoplasm. It catalyses the reaction Cleavage of peptide bonds with very broad specificity.. The formation of the proteasomal ATPase PAN-20S proteasome complex, via the docking of the C-termini of PAN into the intersubunit pockets in the alpha-rings, triggers opening of the gate for substrate entry. Interconversion between the open-gate and close-gate conformations leads to a dynamic regulation of the 20S proteasome proteolysis activity. Component of the proteasome core, a large protease complex with broad specificity involved in protein degradation. The chain is Proteasome subunit beta from Methanocella paludicola (strain DSM 17711 / JCM 13418 / NBRC 101707 / SANAE).